A 173-amino-acid chain; its full sequence is NEDD4-binding protein 2-like 1 (173 aa).

The interval 1–35 is disordered; that stretch reads MEESFLESFGRLSLRQQQPPPPRPPAPPPLRGTPP. The segment covering 18–32 has biased composition (pro residues); the sequence is QPPPPRPPAPPPLRG.

As to quaternary structure, interacts with dynactin subunit proteins, including DCTN4, DCTN5 and DCTN5.

In terms of biological role, might play a role in adipocyte differentiation and triglyceride accumulation. This is NEDD4-binding protein 2-like 1 (N4BP2L1) from Bos taurus (Bovine).